Reading from the N-terminus, the 110-residue chain is Protein C-ets-2 (110 aa).

Positions Ser1–Val84 form a DNA-binding region, ETS.

This sequence belongs to the ETS family.

Its subcellular location is the nucleus. In terms of biological role, probable transcription factor. This chain is Protein C-ets-2 (ETS-2), found in Lytechinus variegatus (Green sea urchin).